The primary structure comprises 306 residues: Nuclear egress protein 1 (306 aa).

The disordered stretch occupies residues methionine 1 to arginine 49. The CCCH-type zinc-finger motif lies at cysteine 106–histidine 225.

This sequence belongs to the herpesviridae NEC1 protein family. Forms a heterohexameric complex with NEC2. Interacts with capsid vertex specific component 2/CVC2; this interaction directs the capsid to the host inner nuclear membrane to initiate budding. Post-translationally, phosphorylated at serine residues in the N-terminus. This phosphorylation regulates the localization within the inner nuclear membrane.

The protein resides in the host nucleus inner membrane. In terms of biological role, plays an essential role in virion nuclear egress, the first step of virion release from infected cell. Within the host nucleus, NEC1 interacts with the newly formed capsid through the vertexes and directs it to the inner nuclear membrane by associating with NEC2. Induces the budding of the capsid at the inner nuclear membrane as well as its envelopment into the perinuclear space. There, the NEC1/NEC2 complex promotes the fusion of the enveloped capsid with the outer nuclear membrane and the subsequent release of the viral capsid into the cytoplasm where it will reach the secondary budding sites in the host Golgi or trans-Golgi network. The chain is Nuclear egress protein 1 from Human herpesvirus 1 (strain 17) (HHV-1).